A 508-amino-acid chain; its full sequence is MRASKANAYVAAIDQGTTSTRCIIIDDTGAVVSVAAKEHEQILPQQGWVEHDPVEIWDNVRAVVSQAMVAIDITPYEISSVGVTNQRETTVIWDPATGEPVYNAIVWQDTRTNEICRELAGEEGQQKWLDRTGLLINSYPAGPKIKWILDNVEGVRERAEKGELYFGTMDTWLLWNLTGGIRGDDGEEALHVTDVTNASRTLLMDIHTQQWDPELCEALDIPMSLLPEIKPSIGDYRSVRHRGILADVPITGVLGDQQAALFGQGGFKEGDTKNTYGTGLFLVMNTGPELKISEHGLLSTIAYQIEGQDPVYALEGSVSMGGSLVQWLRDSLQMIPTAPAIEEFARQVPDNGGVHIVPAFSGLFAPRWHPEARGVITGLTRFANRNHICRAVLEATAFQTREVVDAMARDAGKELESLRVDGAMVQNELLMQMQADILGIDVIRPGDIETTALGTAFAAGLGSGFFKDFDQIIELISIRQTWTPEMTEAERERAYDAWNEAVTHAYPR.

T17 is a binding site for ADP. The ATP site is built by T17, T18, and S19. Residue T17 participates in sn-glycerol 3-phosphate binding. Residue R21 participates in ADP binding. Sn-glycerol 3-phosphate is bound by residues R87, E88, Y139, and D256. Glycerol-binding residues include R87, E88, Y139, D256, and Q257. Residues T278 and G322 each coordinate ADP. 4 residues coordinate ATP: T278, G322, Q326, and A423. ADP is bound by residues A423 and N427.

The protein belongs to the FGGY kinase family.

It catalyses the reaction glycerol + ATP = sn-glycerol 3-phosphate + ADP + H(+). It participates in polyol metabolism; glycerol degradation via glycerol kinase pathway; sn-glycerol 3-phosphate from glycerol: step 1/1. Inhibited by fructose 1,6-bisphosphate (FBP). Functionally, key enzyme in the regulation of glycerol uptake and metabolism. Catalyzes the phosphorylation of glycerol to yield sn-glycerol 3-phosphate. This chain is Glycerol kinase, found in Corynebacterium efficiens (strain DSM 44549 / YS-314 / AJ 12310 / JCM 11189 / NBRC 100395).